The chain runs to 269 residues: Octanoyltransferase LipM (269 aa).

The BPL/LPL catalytic domain maps to 31-239 (NHGAPVLRFY…GFSEGFEVNF (209 aa)). The active-site Acyl-thioester intermediate is the C141.

It belongs to the octanoyltransferase LipM family. As to quaternary structure, monomer.

It catalyses the reaction octanoyl-[ACP] + L-lysyl-[protein] = N(6)-octanoyl-L-lysyl-[protein] + holo-[ACP] + H(+). It functions in the pathway protein modification; protein lipoylation via endogenous pathway; protein N(6)-(lipoyl)lysine from octanoyl-[acyl-carrier-protein]. Its function is as follows. Catalyzes the transfer of endogenously produced octanoic acid from octanoyl-acyl-carrier-protein onto the lipoyl domain of GcvH, an intermediate carrier during protein lipoylation. The chain is Octanoyltransferase LipM from Carboxydothermus hydrogenoformans (strain ATCC BAA-161 / DSM 6008 / Z-2901).